The primary structure comprises 317 residues: Succinate receptor 1 (317 aa).

The Extracellular portion of the chain corresponds to 1–23 (MAQNLSCENWLATEAILNKYYLS). N-linked (GlcNAc...) asparagine glycosylation occurs at Asn-4. The helical transmembrane segment at 24–47 (AFYAIEFIFGLLGNVTVVFGYLFC) threads the bilayer. Topologically, residues 48-55 (MKNWNSSN) are cytoplasmic. The helical transmembrane segment at 56–76 (VYLFNLSISDFAFLCTLPILI) threads the bilayer. Residues 77–101 (KSYANDKGTYGDVLCISNRYVLHTN) lie on the Extracellular side of the membrane. Cysteines 91 and 168 form a disulfide. A helical transmembrane segment spans residues 102–119 (LYTSILFLTFISMDRYLL). At 120-133 (MKYPFREHFLQKKE) the chain is on the cytoplasmic side. Residues 134–157 (FAILISLAVWALVTLEVLPMLTFI) traverse the membrane as a helical segment. The Extracellular segment spans residues 158–180 (NSVPKEEGSNCIDYASSGNPEHN). The chain crosses the membrane as a helical span at residues 181-204 (LIYSLCLTLLGFLIPLSVMCFFYY). The Cytoplasmic portion of the chain corresponds to 205–228 (KMVVFLKRRSQQQATALPLDKPQR). The helical transmembrane segment at 229 to 246 (LVVLAVVIFSILFTPYHI) threads the bilayer. At 247-277 (MRNLRIASRLDSWPQGCTQKAIKSIYTLTRP) the chain is on the extracellular side. Residues 278–294 (LAFLNSAINPIFYFLMG) form a helical membrane-spanning segment. Residues 295-317 (DHYREMLISKFRQYFKSLTSFRT) lie on the Cytoplasmic side of the membrane.

The protein belongs to the G-protein coupled receptor 1 family. As to expression, predominantly expressed in the kidney (proximal and distal tubules and the juxtaglomerular apparatus). Weakly expressed in liver, spleen and small intestine. Highly expressed in immature dendritic cells, expression rapidly downregulates after maturation. Also expressed in macrophages. Specifically expressed in intestinal tuft cells. Expression in whole muscle is attributable to major non-myofibrillar resident cell types, including stromal, endothelial and satellite cell populations.

It localises to the cell membrane. Functionally, g protein-coupled receptor for succinate able to mediate signaling through Gq/GNAQ or Gi/GNAI second messengers depending on the cell type and the processes regulated. Succinate-SUCNR1 signaling serves as a link between metabolic stress, inflammation and energy homeostasis. In macrophages, plays a range of immune-regulatory roles. During inflammation, succinate-SUCNR1 signaling may act as an anti-inflammatory mediator or boost inflammation depending on the inflammatory status of cells. Hyperpolarizes M2 macrophages versus M1 phenotype through Gq signaling by regulating the transcription of genes involved in immune function. In activated M1 macrophages, plays a pro-inflammatory role in response to LPS. Expressed in dendritic cells, where it is involved in the sensing of immunological danger and enhances immunity. Mediates succinate triggered intracelleular calcium mobilization, induces migratory responses and acts in synergy with Toll-like receptor ligands for the production of proinflammatory cytokines as well as an enhancement of antigen-specific activation of helper T cells. In the small intestine, mediates the activation of tuft cells by dietary succinate and triggers type 2 immunity. In adipocytes, plays an important role in the control of energy metabolism. In response to succinate, controls leptin expression in an AMPK-JNK-CEBPA-dependent as well as circadian clock-regulated manner. In muscle tissue, is expressed in non-muscle cells and coordinates muscle remodeling in response to the succinate produced during exercise training in a paracrine manner. In retina, acts as a mediator of vessel growth during retinal development. In response to succinate, regulates the production of angiogenic factors, including VEGF, by retinal ganglion neurons. This is Succinate receptor 1 (Sucnr1) from Mus musculus (Mouse).